An 88-amino-acid chain; its full sequence is UPF0297 protein GK2555 (88 aa).

Belongs to the UPF0297 family.

The polypeptide is UPF0297 protein GK2555 (Geobacillus kaustophilus (strain HTA426)).